The chain runs to 187 residues: Anterior gradient protein 1 (187 aa).

An N-terminal signal peptide occupies residues 1-20; the sequence is MQTGLSLVCLVLLCSALGEA.

This sequence belongs to the AGR family.

It is found in the secreted. Its function is as follows. Probably involved in cement gland formation. This Xenopus tropicalis (Western clawed frog) protein is Anterior gradient protein 1 (ag1).